The primary structure comprises 488 residues: Rhamnulokinase (488 aa).

13–17 contacts ATP; it reads ASSGR. A disulfide bridge links Cys68 with Cys222. Residues Gly83 and 236 to 238 each bind substrate; that span reads HDT. Asp237 functions as the Proton acceptor in the catalytic mechanism. An ATP-binding site is contributed by Thr259. Asn296 is a binding site for substrate. Gln304 lines the ATP pocket. A disulfide bond links Cys353 and Cys370. Gly402 contacts ATP. A disulfide bond links Cys413 and Cys417.

This sequence belongs to the rhamnulokinase family. It depends on Mg(2+) as a cofactor.

It carries out the reaction L-rhamnulose + ATP = L-rhamnulose 1-phosphate + ADP + H(+). The protein operates within carbohydrate degradation; L-rhamnose degradation; glycerone phosphate from L-rhamnose: step 2/3. Functionally, involved in the catabolism of L-rhamnose (6-deoxy-L-mannose). Catalyzes the transfer of the gamma-phosphate group from ATP to the 1-hydroxyl group of L-rhamnulose to yield L-rhamnulose 1-phosphate. This chain is Rhamnulokinase, found in Klebsiella pneumoniae subsp. pneumoniae (strain ATCC 700721 / MGH 78578).